The chain runs to 166 residues: MLPLLIICLLPAIEGKNCLRCWPELSALIDYDLQILWVTPGPPTELSQNRDHLEEETAKFFTQVHQAIKTLRDDKTVLLEEIYTHKNLFTERLNKISDGLKEKDIQSTLKVTSCADCRTHFLSCNDPTFCPARNRRTSLWAVSLSSALLLAIAGDVSFTGKGRRRQ.

The signal sequence occupies residues 1–15; that stretch reads MLPLLIICLLPAIEG. Residues 138–154 form a helical membrane-spanning segment; sequence SLWAVSLSSALLLAIAG.

The protein resides in the membrane. This chain is Testis-expressed protein 51, found in Homo sapiens (Human).